Consider the following 127-residue polypeptide: V-type proton ATPase subunit F (127 aa).

It belongs to the V-ATPase F subunit family. V-ATPase is a heteromultimeric enzyme made up of two complexes: the ATP-hydrolytic V1 complex and the proton translocation V0 complex. The V1 complex consists of three catalytic AB heterodimers that form a heterohexamer, three peripheral stalks each consisting of EG heterodimers, one central rotor including subunits D and F, and the regulatory subunits C and H. The proton translocation complex V0 consists of the proton transport subunit a, a ring of proteolipid subunits c9c'', rotary subunit d, subunits e and f, and the accessory subunits VhaAC45 and ATP6AP2.

Functionally, subunit of the V1 complex of vacuolar(H+)-ATPase (V-ATPase), a multisubunit enzyme composed of a peripheral complex (V1) that hydrolyzes ATP and a membrane integral complex (V0) that translocates protons. V-ATPase is responsible for acidifying and maintaining the pH of intracellular compartments and in some cell types, is targeted to the plasma membrane, where it is responsible for acidifying the extracellular environment. This Anopheles gambiae (African malaria mosquito) protein is V-type proton ATPase subunit F (Vha14).